The chain runs to 756 residues: Catalase-peroxidase (756 aa).

Residues 91 to 244 (WHSAGTYRTG…LAAVQMGLIY (154 aa)) constitute a cross-link (tryptophyl-tyrosyl-methioninium (Trp-Tyr) (with M-270)). The active-site Proton acceptor is H92. Residues 198-230 (AQKKMQQPGDGTLVAEPENHANEESRTASGERN) form a disordered region. Basic and acidic residues predominate over residues 214-223 (PENHANEESR). Positions 244–270 (YVNPEGPEGVPDPVASARDIRETFGRM) form a cross-link, tryptophyl-tyrosyl-methioninium (Tyr-Met) (with W-91). H285 contacts heme b.

Belongs to the peroxidase family. Peroxidase/catalase subfamily. As to quaternary structure, homodimer or homotetramer. The cofactor is heme b. Formation of the three residue Trp-Tyr-Met cross-link is important for the catalase, but not the peroxidase activity of the enzyme.

It catalyses the reaction H2O2 + AH2 = A + 2 H2O. It carries out the reaction 2 H2O2 = O2 + 2 H2O. Functionally, bifunctional enzyme with both catalase and broad-spectrum peroxidase activity. In Pseudomonas syringae pv. syringae (strain B728a), this protein is Catalase-peroxidase.